We begin with the raw amino-acid sequence, 54 residues long: Large ribosomal subunit protein bL32c (54 aa).

This sequence belongs to the bacterial ribosomal protein bL32 family.

It localises to the plastid. The protein resides in the chloroplast. The polypeptide is Large ribosomal subunit protein bL32c (Helianthus annuus (Common sunflower)).